Consider the following 1109-residue polypeptide: RNA2 polyprotein (1109 aa).

Belongs to the nepoviruses RNA2 polyprotein family. In terms of processing, specific enzymatic cleavages in vivo by the P1 encoded 3C-like protease yield mature proteins.

The protein resides in the host cell junction. It is found in the host plasmodesma. It localises to the host cytoplasm. The protein localises to the host nucleus. Its subcellular location is the virion. Its function is as follows. Implicated in RNA2 replication. Could also be required for nematode transmission of the virus. Functionally, transports viral genome to neighboring plant cells directly through plasmosdesmata, without any budding. The movement protein allows efficient cell to cell propagation, by bypassing the host cell wall barrier. Acts by forming a tubular structure at the host plasmodesmata, enlarging it enough to allow free passage of virion capsids. This chain is RNA2 polyprotein, found in Vitis rupestris (Grape).